The sequence spans 222 residues: CCA-adding enzyme (222 aa).

Residues Ser-50 and Lys-53 each coordinate ATP. Positions 50 and 53 each coordinate CTP. The Mg(2+) site is built by Asp-61, Asp-63, and Asp-112. Positions 135, 155, and 164 each coordinate ATP. His-135, Lys-155, and Tyr-164 together coordinate CTP.

The protein belongs to the tRNA nucleotidyltransferase/poly(A) polymerase family. Archaeal CCA-adding enzyme subfamily. In terms of assembly, homodimer. The cofactor is Mg(2+).

It carries out the reaction a tRNA precursor + 2 CTP + ATP = a tRNA with a 3' CCA end + 3 diphosphate. The catalysed reaction is a tRNA with a 3' CCA end + 2 CTP + ATP = a tRNA with a 3' CCACCA end + 3 diphosphate. Catalyzes the addition and repair of the essential 3'-terminal CCA sequence in tRNAs without using a nucleic acid template. Adds these three nucleotides in the order of C, C, and A to the tRNA nucleotide-73, using CTP and ATP as substrates and producing inorganic pyrophosphate. tRNA 3'-terminal CCA addition is required both for tRNA processing and repair. Also involved in tRNA surveillance by mediating tandem CCA addition to generate a CCACCA at the 3' terminus of unstable tRNAs. While stable tRNAs receive only 3'-terminal CCA, unstable tRNAs are marked with CCACCA and rapidly degraded. In Thermoplasma acidophilum, this protein is CCA-adding enzyme.